The following is a 164-amino-acid chain: MDATYEELERNDIKGPQEAELLTHAYAGFWVRFWAFLLDWLVIWGLNHLLVSPLFTVLDLPKTSGMFTFSAYSVTTLIVYLAYFALMTKYFRQTLGKMVFGLKVVSVKQDSKLTWSTVIFREVVGRYIDKIWILYIVVAFSPTKQGIHDYIADTTVVHEKLYRK.

The 133-residue stretch at 26–158 (YAGFWVRFWA…DYIADTTVVH (133 aa)) folds into the RDD domain. A run of 2 helical transmembrane segments spans residues 35-55 (AFLLDWLVIWGLNHLLVSPLF) and 66-86 (MFTFSAYSVTTLIVYLAYFAL).

Its subcellular location is the cell membrane. This is an uncharacterized protein from Bacillus subtilis (strain 168).